A 763-amino-acid polypeptide reads, in one-letter code: Nibrin (763 aa).

Residues 22–81 (YVVGRKNCAILIPEDQSISRCHATLSVSHPSANLGQTNAASVLSIKDSSKYGTTVNGDKM) form the FHA domain. BRCT domains follow at residues 102–179 (SKYR…CELL) and 215–324 (KRKS…NPRR). Disordered regions lie at residues 389–496 (VKET…SSQT), 535–593 (SKAA…SEIE), and 738–763 (QTQQVREESLAEDLFRYNPKPSKRRR). The span at 423 to 433 (LFREDETDTRK) shows a compositional bias: basic and acidic residues. Residues 434 to 443 (NTPSLLPTKS) show a composition bias toward polar residues. A Nuclear localization signal motif is present at residues 469–474 (AKKRDR). The span at 473–482 (DRAEDEKEAS) shows a compositional bias: basic and acidic residues. Residues 742-752 (VREESLAEDLF) are compositionally biased toward basic and acidic residues. Positions 748-757 (AEDLFRYNPK) match the FxF/Y motif motif.

The protein belongs to the Nibrin family. In terms of assembly, component of the MRN complex composed of two heterodimers rad50 and mre11 associated with a single nbn.

It localises to the nucleus. The protein localises to the chromosome. The protein resides in the PML body. It is found in the telomere. Functionally, component of the MRN complex, which plays a central role in double-strand break (DSB) repair, DNA recombination, maintenance of telomere integrity and meiosis. The MRN complex is involved in the repair of DNA double-strand breaks (DSBs) via homologous recombination (HR), an error-free mechanism which primarily occurs during S and G2 phases. The complex (1) mediates the end resection of damaged DNA, which generates proper single-stranded DNA, a key initial steps in HR, and is (2) required for the recruitment of other repair factors and efficient activation of ATM and ATR upon DNA damage. The MRN complex possesses single-strand endonuclease activity and double-strand-specific 3'-5' exonuclease activity, which are provided by MRE11, to initiate end resection, which is required for single-strand invasion and recombination. Within the MRN complex, nbn acts as a protein-protein adapter, which specifically recognizes and binds phosphorylated proteins, promoting their recruitment to DNA damage sites. Recruits mre11 and rad50 components of the MRN complex to DSBs in response to DNA damage. Promotes the recruitment of PI3/PI4-kinase family members atm, atr, and probably DNA-PKcs to the DNA damage sites, activating their functions. Mediates the recruitment of phosphorylated rbbp8/CtIP to DSBs, leading to cooperation between the MRN complex and rbbp8/CtIP to initiate end resection. The MRN complex promotes recruitment of topbp1 to DNA damage sites. The MRN complex and rbbp8/CtIP are also required for chromosome alignment during metaphase. This Xenopus laevis (African clawed frog) protein is Nibrin.